A 266-amino-acid polypeptide reads, in one-letter code: Early E1A protein (266 aa).

The interaction with RB1 in competition with E2F1 stretch occupies residues 39–47; it reads MSLHEMYDL. Positions 94–98 match the PXLXP motif, interaction with host ZMYND11 motif; that stretch reads PELQP. The LXCXE motif, interaction with host RB1 signature appears at 103–107; sequence LFCYE. Residues 160–180 fold into a zinc finger; the sequence is CSSCDYHRKTSGCPEILCSLC. The segment at 193-244 is disordered; sequence VSDSEPDEPDSTTADSNHGSPPTLRCTPPRDLPRPVPVKASPGKRPAVNSLH. Positions 203 to 212 are enriched in polar residues; sequence STTADSNHGS. A PXDLS motif, CTBP-binding motif is present at residues 255–259; it reads PLDLS. Positions 261-265 match the Nuclear localization signal motif; the sequence is KRSRS.

It belongs to the adenoviridae E1A protein family. Interacts with host UBE2I; this interaction interferes with polySUMOylation. Interacts with host RB1; this interaction induces the aberrant dissociation of RB1-E2F1 complex thereby disrupting the activity of RB1 and activating E2F1-regulated genes. Interacts with host ATF7; the interaction enhances ATF7-mediated viral transactivation activity which requires the zinc binding domains of both proteins. Isoform early E1A 32 kDa protein and isoform early E1A 26 kDa protein interact (via N-terminus) with CUL1 and E3 ubiquitin ligase RBX1; these interactions inhibit RBX1-CUL1-dependent elongation reaction of ubiquitin chains and attenuate ubiquitination of SCF(FBXW7) target proteins. Interacts (via PXLXP motif) with host ZMYND11/BS69 (via MYND-type zinc finger); this interaction inhibits E1A mediated transactivation. Interacts with host EP300; this interaction stimulates the acetylation of RB1 by recruiting EP300 and RB1 into a multimeric-protein complex. Interacts with host CTBP1 and CTBP2; this interaction seems to potentiate viral replication. Interacts with host DCAF7. Interacts with host DYRK1A. Interacts with host KPNA4; this interaction allows E1A import into the host nucleus. Interacts with host EP400; this interaction stabilizes MYC. Interacts with host TBP protein; this interaction probably disrupts the TBP-TATA complex.

The protein resides in the host nucleus. Its function is as follows. Plays a role in viral genome replication by driving entry of quiescent cells into the cell cycle. Stimulation of progression from G1 to S phase allows the virus to efficiently use the cellular DNA replicating machinery to achieve viral genome replication. E1A protein has both transforming and trans-activating activities. Induces the disassembly of the E2F1 transcription factor from RB1 by direct competition for the same binding site on RB1, with subsequent transcriptional activation of E2F1-regulated S-phase genes and of the E2 region of the adenoviral genome. Release of E2F1 leads to the ARF-mediated inhibition of MDM2 and causes TP53/p53 to accumulate because it is not targeted for degradation by MDM2-mediated ubiquitination anymore. This increase in TP53, in turn, would arrest the cell proliferation and direct its death but this effect is counteracted by the viral protein E1B-55K. Inactivation of the ability of RB1 to arrest the cell cycle is critical for cellular transformation, uncontrolled cellular growth and proliferation induced by viral infection. Interaction with RBX1 and CUL1 inhibits ubiquitination of the proteins targeted by SCF(FBXW7) ubiquitin ligase complex, and may be linked to unregulated host cell proliferation. The tumorigenesis-restraining activity of E1A may be related to the disruption of the host CtBP-CtIP complex through the CtBP binding motif. This Simian adenovirus serotype 7 (SAdV-7) protein is Early E1A protein.